The following is a 333-amino-acid chain: Cap-specific mRNA (nucleoside-2'-O-)-methyltransferase (333 aa).

Tyr22 provides a ligand contact to mRNA. Residues Gln39, Tyr66, Gly68, Gly72, Asp95, Arg97, Val116, and Asp138 each coordinate S-adenosyl-L-methionine. Positions 169–249 (PVASSLKWRC…NKIVRNKVVV (81 aa)) are binding to NPH-I. The interval 169–333 (PVASSLKWRC…NSKRSVRGNK (165 aa)) is binding to Rap94. Catalysis depends on Lys175, which acts as the For methyltransferase activity. Residues 177–180 (RCPF), Asp182, 205–207 (SAE), and Glu233 contribute to the mRNA site.

Belongs to the class I-like SAM-binding methyltransferase superfamily. Poxvirus/kinetoplastid 2'-O-MTase family. As to quaternary structure, interacts with poly(A) polymerase catalytic subunit OPG063. Interacts with OPG109 and OPG123; these interactions might help linking transcription to capping and polyadenylation.

It localises to the virion. The enzyme catalyses a 5'-end (N(7)-methyl 5'-triphosphoguanosine)-ribonucleoside in mRNA + S-adenosyl-L-methionine = a 5'-end (N(7)-methyl 5'-triphosphoguanosine)-(2'-O-methyl-ribonucleoside) in mRNA + S-adenosyl-L-homocysteine + H(+). In terms of biological role, displays methyltransferase, positive regulation of the poly(A) polymerase and transcription elongation activities. Involved in the modification of both mRNA ends and in intermediate and late gene positive transcription elongation. At the mRNAs 5' end, methylates the ribose 2' OH group of the first transcribed nucleotide, thereby producing a 2'-O-methylpurine cap. At the 3' end, functions as a processivity factor which stimulates the activity of the viral poly(A) polymerase OPG063 that creates mRNA's poly(A) tail. In the presence of OPG102, OPG063 does not dissociate from the RNA allowing tail elongation to around 250 adenylates. The polypeptide is Cap-specific mRNA (nucleoside-2'-O-)-methyltransferase (OPG102) (Homo sapiens (Human)).